Consider the following 275-residue polypeptide: MLGSFVKLNNGLKCPQFAYGSYMVNRTKCFDSVYAALQCGYRHIDSAQMYHNEADCGRAILKFMEETGTKREDIWFTSKLNDLSGYKSTLSSIDASVKACGLGYIDLFLLHSPYGDRIESWKALEKGVEEGKLRAIGVSNFGPHHIQELLDSHPKIIPCVNQIELHPFCSQQKVVDYCESKGIQLAAYAPLVHGEKFGNKQLLAIASKYNKSEAQIMIRYCLQRGFIVLPKSSTPRRIKENGDVFDFEISKEDMEKLYNLDEDYHSDWNPCVSPL.

Residue D45 coordinates NADPH. Catalysis depends on proton donor residues Y50 and H111. 7 residues coordinate NADPH: S139, Q162, L191, K196, S232, S233, and R237.

The protein belongs to the aldo/keto reductase family.

The protein localises to the cytoplasm. Its subcellular location is the nucleus. This is an uncharacterized protein from Schizosaccharomyces pombe (strain 972 / ATCC 24843) (Fission yeast).